Reading from the N-terminus, the 430-residue chain is GTPase Obg (430 aa).

The Obg domain occupies 1-158; sequence MFIDKAKIYL…LTVVLELKLI (158 aa). In terms of domain architecture, OBG-type G spans 159-330; that stretch reads ADVGLVGFPN…LLSYVSKRLK (172 aa). GTP contacts are provided by residues 165-172, 190-194, 212-215, 282-285, and 311-313; these read GFPNVGKS, FTTLT, DIPG, NKTD, and SAA. Ser172 and Thr192 together coordinate Mg(2+). Residues 351–430 enclose the OCT domain; the sequence is KYEETEDKYH…MYSVEFEYFN (80 aa).

Belongs to the TRAFAC class OBG-HflX-like GTPase superfamily. OBG GTPase family. Monomer. Mg(2+) serves as cofactor.

It localises to the cytoplasm. In terms of biological role, an essential GTPase which binds GTP, GDP and possibly (p)ppGpp with moderate affinity, with high nucleotide exchange rates and a fairly low GTP hydrolysis rate. Plays a role in control of the cell cycle, stress response, ribosome biogenesis and in those bacteria that undergo differentiation, in morphogenesis control. The sequence is that of GTPase Obg from Alkaliphilus oremlandii (strain OhILAs) (Clostridium oremlandii (strain OhILAs)).